The sequence spans 111 residues: Complement inhibitor CirpT1 (111 aa).

Positions 1-19 are cleaved as a signal peptide; the sequence is MATLIAARTKRKAPRVRIF. Disulfide bonds link cysteine 40–cysteine 64, cysteine 59–cysteine 98, cysteine 76–cysteine 99, and cysteine 85–cysteine 104.

It belongs to the CirpT family. As to expression, expressed in salivary glands.

The protein localises to the secreted. In terms of biological role, complement inhibitor. Prevents complement-mediated activation of C5 by sterically preventing direct binding of C5 to its convertase (binding with domains MG4 and MG5). Binds C5 at a different binding site than the other tick complement inhibitors OmCI and RaCI3, and the drug eculizumab. Inhibits the complement in human, rat and guinea pig, and also shows a reduced inhibition in rabbit and pig. In Rhipicephalus pulchellus (Yellow backed tick), this protein is Complement inhibitor CirpT1.